Consider the following 79-residue polypeptide: Dicentracin (79 aa).

The N-terminal stretch at 1 to 22 is a signal peptide; the sequence is MKCATLFLVLSMVVLMAEPGDA. A Glycine amide modification is found at Gly-44. The propeptide occupies 47–79; that stretch reads AQQDQQDQQYQQDQQDQQAEQYQRFNRERAAFD. The disordered stretch occupies residues 48–67; that stretch reads QQDQQDQQYQQDQQDQQAEQ.

This sequence belongs to the pleurocidin family.

It localises to the secreted. The protein is Dicentracin of Dicentrarchus labrax (European seabass).